A 276-amino-acid polypeptide reads, in one-letter code: Small ribosomal subunit protein uS2 (276 aa).

Ser2 carries the post-translational modification N-acetylserine.

The protein belongs to the universal ribosomal protein uS2 family. In terms of assembly, component of the small ribosomal subunit. Mature ribosomes consist of a small (40S) and a large (60S) subunit. The 40S subunit contains about 33 different proteins and 1 molecule of RNA (18S). The 60S subunit contains about 49 different proteins and 3 molecules of RNA (28S, 5.8S and 5S). Interacts with rps-21.

It localises to the cytoplasm. Functionally, required for the assembly and/or stability of the 40S ribosomal subunit. Required for the processing of the 20S rRNA-precursor to mature 18S rRNA in a late step of the maturation of 40S ribosomal subunits. Involved in cold-warm shock-induced translocation of the RNA exosome components from the nucleolus to nucleoplasm. The chain is Small ribosomal subunit protein uS2 from Caenorhabditis elegans.